The chain runs to 275 residues: NH(3)-dependent NAD(+) synthetase (275 aa).

46–53 lines the ATP pocket; it reads GISGGQDS. Position 52 (aspartate 52) interacts with Mg(2+). Arginine 140 serves as a coordination point for deamido-NAD(+). ATP is bound at residue threonine 160. Glutamate 165 provides a ligand contact to Mg(2+). Deamido-NAD(+)-binding residues include lysine 173 and aspartate 180. The ATP site is built by lysine 189 and threonine 211. Deamido-NAD(+) is bound at residue 260-261; that stretch reads HK.

The protein belongs to the NAD synthetase family. As to quaternary structure, homodimer.

It carries out the reaction deamido-NAD(+) + NH4(+) + ATP = AMP + diphosphate + NAD(+) + H(+). It participates in cofactor biosynthesis; NAD(+) biosynthesis; NAD(+) from deamido-NAD(+) (ammonia route): step 1/1. Catalyzes the ATP-dependent amidation of deamido-NAD to form NAD. Uses ammonia as a nitrogen source. The sequence is that of NH(3)-dependent NAD(+) synthetase from Salmonella dublin (strain CT_02021853).